A 262-amino-acid chain; its full sequence is Succinate dehydrogenase [ubiquinone] iron-sulfur subunit (262 aa).

Residues 21–110 (KLIKIFRWDS…NNIIYVYPLP (90 aa)) enclose the 2Fe-2S ferredoxin-type domain. Residues Cys-73, Cys-78, Cys-81, and Cys-93 each coordinate [2Fe-2S] cluster. The region spanning 154 to 184 (DRLYLDGLYECILCACCSASCPSYWWNHDKY) is the 4Fe-4S ferredoxin-type domain. Residues Cys-164, Cys-167, and Cys-170 each coordinate [4Fe-4S] cluster. Cys-174 serves as a coordination point for [3Fe-4S] cluster. Trp-179 serves as a coordination point for a ubiquinone. [3Fe-4S] cluster is bound by residues Cys-221 and Cys-227. Cys-231 serves as a coordination point for [4Fe-4S] cluster.

This sequence belongs to the succinate dehydrogenase/fumarate reductase iron-sulfur protein family. Component of complex II composed of four subunits: a flavoprotein (FP), an iron-sulfur protein (IP), and a cytochrome b composed of a large and a small subunit. [2Fe-2S] cluster is required as a cofactor. [3Fe-4S] cluster serves as cofactor. The cofactor is [4Fe-4S] cluster.

It localises to the mitochondrion inner membrane. It carries out the reaction a quinone + succinate = fumarate + a quinol. Its pathway is carbohydrate metabolism; tricarboxylic acid cycle; fumarate from succinate (eukaryal route): step 1/1. Iron-sulfur protein (IP) subunit of succinate dehydrogenase (SDH) that is involved in complex II of the mitochondrial electron transport chain and is responsible for transferring electrons from succinate to ubiquinone (coenzyme Q). The protein is Succinate dehydrogenase [ubiquinone] iron-sulfur subunit (SDH2) of Cyanidium caldarium (Red alga).